The sequence spans 298 residues: NADH-cytochrome b5 reductase 2 (298 aa).

The helical transmembrane segment at 13–33 threads the bilayer; sequence FLPFAIGAVAVTAGALYLNGW. The FAD-binding FR-type domain maps to 48–152; sequence RKWIDLELEK…QGPIPKWQWK (105 aa). Residue 155–190 participates in FAD binding; the sequence is SFDTITLLGGGTGITPLYQLVHHITQNKEDKTKINL.

It belongs to the flavoprotein pyridine nucleotide cytochrome reductase family. FAD is required as a cofactor.

It localises to the mitochondrion outer membrane. The catalysed reaction is 2 Fe(III)-[cytochrome b5] + NADH = 2 Fe(II)-[cytochrome b5] + NAD(+) + H(+). May mediate the reduction of outer membrane cytochrome b5. This Candida glabrata (strain ATCC 2001 / BCRC 20586 / JCM 3761 / NBRC 0622 / NRRL Y-65 / CBS 138) (Yeast) protein is NADH-cytochrome b5 reductase 2 (MCR1).